The following is a 478-amino-acid chain: ATP synthase subunit beta (478 aa).

152 to 159 (GGAGVGKT) contacts ATP.

Belongs to the ATPase alpha/beta chains family. F-type ATPases have 2 components, CF(1) - the catalytic core - and CF(0) - the membrane proton channel. CF(1) has five subunits: alpha(3), beta(3), gamma(1), delta(1), epsilon(1). CF(0) has three main subunits: a(1), b(2) and c(9-12). The alpha and beta chains form an alternating ring which encloses part of the gamma chain. CF(1) is attached to CF(0) by a central stalk formed by the gamma and epsilon chains, while a peripheral stalk is formed by the delta and b chains.

The protein localises to the cell membrane. It catalyses the reaction ATP + H2O + 4 H(+)(in) = ADP + phosphate + 5 H(+)(out). Produces ATP from ADP in the presence of a proton gradient across the membrane. The catalytic sites are hosted primarily by the beta subunits. This Wolbachia pipientis subsp. Culex pipiens (strain wPip) protein is ATP synthase subunit beta.